A 405-amino-acid chain; its full sequence is Glyceraldehyde-3-phosphate dehydrogenase A, chloroplastic (405 aa).

The transit peptide at 1–68 (MASATFSVAK…GHKKSLVVEA (68 aa)) directs the protein to the chloroplast. Residues 80–81 (RI), Asp104, and Arg149 contribute to the NADP(+) site. D-glyceraldehyde 3-phosphate is bound by residues 221–223 (SCT), Thr252, Arg267, 280–281 (TG), and Arg303. Cys222 functions as the Nucleophile in the catalytic mechanism. NADP(+) is bound at residue Asn385.

Belongs to the glyceraldehyde-3-phosphate dehydrogenase family. Tetramer of either four A chains (GAPDH 2) or two A and two B chains (GAPDH 1).

Its subcellular location is the plastid. It localises to the chloroplast. The enzyme catalyses D-glyceraldehyde 3-phosphate + phosphate + NADP(+) = (2R)-3-phospho-glyceroyl phosphate + NADPH + H(+). The protein operates within carbohydrate biosynthesis; Calvin cycle. In Pisum sativum (Garden pea), this protein is Glyceraldehyde-3-phosphate dehydrogenase A, chloroplastic (GAPA).